The following is a 70-amino-acid chain: Putative peptide YY-3 (70 aa).

Residues 1-23 form the signal peptide; the sequence is MVSVCRPWPAVAIALLALLVCLG.

The protein belongs to the NPY family.

Its subcellular location is the secreted. The protein is Putative peptide YY-3 (PYY3) of Homo sapiens (Human).